The following is a 269-amino-acid chain: Zinc import ATP-binding protein ZnuC (269 aa).

Residues valine 6–aspartate 221 form the ABC transporter domain. Residue glycine 38–threonine 45 participates in ATP binding.

The protein belongs to the ABC transporter superfamily. Zinc importer (TC 3.A.1.15.5) family. As to quaternary structure, the complex is composed of two ATP-binding proteins (ZnuC), two transmembrane proteins (ZnuB) and a solute-binding protein (ZnuA).

The protein resides in the cell inner membrane. The enzyme catalyses Zn(2+)(out) + ATP(in) + H2O(in) = Zn(2+)(in) + ADP(in) + phosphate(in) + H(+)(in). In terms of biological role, part of the ABC transporter complex ZnuABC involved in zinc import. Responsible for energy coupling to the transport system. In Pseudomonas aeruginosa (strain UCBPP-PA14), this protein is Zinc import ATP-binding protein ZnuC.